Reading from the N-terminus, the 206-residue chain is N-(5'-phosphoribosyl)anthranilate isomerase (206 aa).

The protein belongs to the TrpF family.

The catalysed reaction is N-(5-phospho-beta-D-ribosyl)anthranilate = 1-(2-carboxyphenylamino)-1-deoxy-D-ribulose 5-phosphate. It functions in the pathway amino-acid biosynthesis; L-tryptophan biosynthesis; L-tryptophan from chorismate: step 3/5. The sequence is that of N-(5'-phosphoribosyl)anthranilate isomerase from Pseudomonas savastanoi pv. phaseolicola (strain 1448A / Race 6) (Pseudomonas syringae pv. phaseolicola (strain 1448A / Race 6)).